Consider the following 398-residue polypeptide: Probable aminomethyltransferase (398 aa).

It belongs to the GcvT family. As to quaternary structure, the glycine cleavage system is composed of four proteins: P, T, L and H.

The enzyme catalyses N(6)-[(R)-S(8)-aminomethyldihydrolipoyl]-L-lysyl-[protein] + (6S)-5,6,7,8-tetrahydrofolate = N(6)-[(R)-dihydrolipoyl]-L-lysyl-[protein] + (6R)-5,10-methylene-5,6,7,8-tetrahydrofolate + NH4(+). Its function is as follows. The glycine cleavage system catalyzes the degradation of glycine. The protein is Probable aminomethyltransferase of Pyrococcus furiosus (strain ATCC 43587 / DSM 3638 / JCM 8422 / Vc1).